The chain runs to 218 residues: Adenylate kinase (218 aa).

Gly-12–Thr-17 provides a ligand contact to ATP. The NMP stretch occupies residues Ser-32 to Val-61. AMP is bound by residues Thr-33, Arg-38, Glu-59–Val-61, Gly-85–Arg-88, and Gln-92. Residues Gly-126–Asp-164 form an LID region. Arg-127 serves as a coordination point for ATP. Zn(2+) contacts are provided by Cys-130 and Cys-133. Val-136–Tyr-137 is an ATP binding site. Zn(2+) is bound by residues Cys-150 and Cys-153. 2 residues coordinate AMP: Arg-161 and Arg-172. Ala-200 contributes to the ATP binding site.

This sequence belongs to the adenylate kinase family. As to quaternary structure, monomer.

The protein localises to the cytoplasm. It carries out the reaction AMP + ATP = 2 ADP. It functions in the pathway purine metabolism; AMP biosynthesis via salvage pathway; AMP from ADP: step 1/1. Catalyzes the reversible transfer of the terminal phosphate group between ATP and AMP. Plays an important role in cellular energy homeostasis and in adenine nucleotide metabolism. The chain is Adenylate kinase from Paracoccus denitrificans (strain Pd 1222).